Here is a 151-residue protein sequence, read N- to C-terminus: Deoxyuridine 5'-triphosphate nucleotidohydrolase (151 aa).

Substrate contacts are provided by residues 70 to 72 (RSG), Asn-83, 87 to 89 (LID), and Met-97.

It belongs to the dUTPase family. Mg(2+) serves as cofactor.

The enzyme catalyses dUTP + H2O = dUMP + diphosphate + H(+). The protein operates within pyrimidine metabolism; dUMP biosynthesis; dUMP from dCTP (dUTP route): step 2/2. This enzyme is involved in nucleotide metabolism: it produces dUMP, the immediate precursor of thymidine nucleotides and it decreases the intracellular concentration of dUTP so that uracil cannot be incorporated into DNA. The protein is Deoxyuridine 5'-triphosphate nucleotidohydrolase of Mannheimia succiniciproducens (strain KCTC 0769BP / MBEL55E).